Consider the following 292-residue polypeptide: S-adenosyl-L-methionine-dependent Diels-Alderase iccD (292 aa).

The helical transmembrane segment at 240 to 262 (LPVVRMFYVVLLVPYLFVRLLGI) threads the bilayer.

Belongs to the class I-like SAM-binding methyltransferase superfamily. Erg6/SMT family. It depends on S-adenosyl-L-methionine as a cofactor.

It is found in the membrane. The catalysed reaction is 3-[(2E,4E,8S,10E,12Z)-4,8-dimethyltetradeca-2,4,10,12-tetraenoyl]-4-hydroxy-5-(4-hydroxyphenyl)-1,2-dihydropyridin-2-one = 8-epi-ilicicolin H. It participates in mycotoxin biosynthesis. S-adenosyl-l-methionine-dependent Diels-Alderase; part of the gene cluster that mediates the biosynthesis of ilicicolin H, a 4-hydroxy-2-pyridonealkaloid that has potent and broad antifungal activities by inhibiting the mitochondrial respiration chain. IccD catalyzes the Diels-Alder reaction that converts the acyclic 2-pyridone intermediate to 8-epi-ilicicolin H. The biosynthesis of ilicicolin H starts with formation of the tetramic acid by the hybrid PKS-NRPS synthetase iccA with the partnering trans-enoyl reductase iccB since iccA lacks a designated enoylreductase (ER) domain. The cytochrome P450 monooxygenase iccC then catalyzes the ring expansion of the tetramate to the acyclic 2-pyridone. The pericyclase iccD further converts the acyclic 2-pyridone into 8-epi-ilicicolin H. Finally, the epimerase iccE converts 8-epi-ilicicolin H into ilicicolin H via epimerization. IccA to iccE are sufficient for ilicicolin H biosynthesis and the roles of the remaining enzymes, iccF, iccG and iccH within the pathway have still to be determined. The protein is S-adenosyl-L-methionine-dependent Diels-Alderase iccD of Talaromyces variabilis (Penicillium variabile).